Here is a 435-residue protein sequence, read N- to C-terminus: Glutamyl-tRNA reductase (435 aa).

Residues 49 to 52 (TCNR), Ser-109, 114 to 116 (ETQ), and Gln-120 each bind substrate. The Nucleophile role is filled by Cys-50. 189 to 194 (GAGEMS) serves as a coordination point for NADP(+).

This sequence belongs to the glutamyl-tRNA reductase family. In terms of assembly, homodimer.

The enzyme catalyses (S)-4-amino-5-oxopentanoate + tRNA(Glu) + NADP(+) = L-glutamyl-tRNA(Glu) + NADPH + H(+). It functions in the pathway porphyrin-containing compound metabolism; protoporphyrin-IX biosynthesis; 5-aminolevulinate from L-glutamyl-tRNA(Glu): step 1/2. Functionally, catalyzes the NADPH-dependent reduction of glutamyl-tRNA(Glu) to glutamate 1-semialdehyde (GSA). The chain is Glutamyl-tRNA reductase from Listeria monocytogenes serovar 1/2a (strain ATCC BAA-679 / EGD-e).